Here is a 204-residue protein sequence, read N- to C-terminus: Putative uracil phosphoribosyltransferase urg2 (204 aa).

5-phospho-alpha-D-ribose 1-diphosphate is bound by residues Arg75, Arg100, and 126–134; that span reads DPVMATGGT. Tyr187 lines the D-ribose 5-phosphate pocket. Uracil is bound by residues Leu188 and 193–195; that span reads GDI. Asp194 lines the 5-phospho-alpha-D-ribose 1-diphosphate pocket.

The protein belongs to the UPRTase family. The cofactor is Mg(2+).

The protein resides in the cytoplasm. The protein localises to the nucleus. It catalyses the reaction UMP + diphosphate = 5-phospho-alpha-D-ribose 1-diphosphate + uracil. It participates in pyrimidine metabolism; UMP biosynthesis via salvage pathway; UMP from uracil: step 1/1. With respect to regulation, allosterically activated by GTP. Catalyzes the conversion of uracil and 5-phospho-alpha-D-ribose 1-diphosphate (PRPP) to UMP and diphosphate. The chain is Putative uracil phosphoribosyltransferase urg2 from Schizosaccharomyces pombe (strain 972 / ATCC 24843) (Fission yeast).